We begin with the raw amino-acid sequence, 509 residues long: ATP synthase subunit alpha (509 aa).

169–176 (GDRQTGKT) lines the ATP pocket.

The protein belongs to the ATPase alpha/beta chains family. F-type ATPases have 2 components, CF(1) - the catalytic core - and CF(0) - the membrane proton channel. CF(1) has five subunits: alpha(3), beta(3), gamma(1), delta(1), epsilon(1). CF(0) has three main subunits: a(1), b(2) and c(9-12). The alpha and beta chains form an alternating ring which encloses part of the gamma chain. CF(1) is attached to CF(0) by a central stalk formed by the gamma and epsilon chains, while a peripheral stalk is formed by the delta and b chains.

The protein resides in the cell inner membrane. It catalyses the reaction ATP + H2O + 4 H(+)(in) = ADP + phosphate + 5 H(+)(out). In terms of biological role, produces ATP from ADP in the presence of a proton gradient across the membrane. The alpha chain is a regulatory subunit. The chain is ATP synthase subunit alpha from Agrobacterium fabrum (strain C58 / ATCC 33970) (Agrobacterium tumefaciens (strain C58)).